The following is a 163-amino-acid chain: MTFEEKLSKIYNEIANEISSMIPVEWEKVYTMAYIDDGGGEVFFNYTKPGSDDLNYYTNIPKEYNISVQVFDDLWMDLYDLFEELRDLFKEEDLEPWTSCEFDFTREGELKVSFDYIDWINSEFGQIGRQNYYKYRKFGILPETEYEINKVKEIEQYIKELEE.

Interacts with EssD (via C-terminus). Interacts with EssE.

It is found in the cytoplasm. Functionally, component of the type VII secretion system (Ess). Also acts as part of toxin-antitoxin system. Counteracts the toxic effect of EssD via direct interaction. This chain is Type VII secretion system protein EsaG, found in Staphylococcus aureus (strain NCTC 8325 / PS 47).